Consider the following 36-residue polypeptide: Photosystem I reaction center subunit VIII (36 aa).

The helical transmembrane segment at 8–28 threads the bilayer; that stretch reads SIFVPLVGLVFPAIAIASLFL.

Belongs to the PsaI family.

It is found in the plastid. The protein localises to the chloroplast thylakoid membrane. Its function is as follows. May help in the organization of the PsaL subunit. This is Photosystem I reaction center subunit VIII from Jasminum nudiflorum (Winter jasmine).